The sequence spans 303 residues: Oxygen-dependent coproporphyrinogen-III oxidase (303 aa).

Serine 93 contributes to the substrate binding site. 2 residues coordinate a divalent metal cation: histidine 97 and histidine 107. Catalysis depends on histidine 107, which acts as the Proton donor. 109–111 (NVR) is a binding site for substrate. Residues histidine 146 and histidine 176 each coordinate a divalent metal cation. An important for dimerization region spans residues 241–276 (YVEFNLVYDRGTLFGLQSGGRTESILMSLPPQVRWG). Residue 259 to 261 (GGR) coordinates substrate.

The protein belongs to the aerobic coproporphyrinogen-III oxidase family. In terms of assembly, homodimer. Requires a divalent metal cation as cofactor.

The protein resides in the cytoplasm. The catalysed reaction is coproporphyrinogen III + O2 + 2 H(+) = protoporphyrinogen IX + 2 CO2 + 2 H2O. Its pathway is porphyrin-containing compound metabolism; protoporphyrin-IX biosynthesis; protoporphyrinogen-IX from coproporphyrinogen-III (O2 route): step 1/1. Functionally, involved in the heme biosynthesis. Catalyzes the aerobic oxidative decarboxylation of propionate groups of rings A and B of coproporphyrinogen-III to yield the vinyl groups in protoporphyrinogen-IX. The polypeptide is Oxygen-dependent coproporphyrinogen-III oxidase (Pseudomonas entomophila (strain L48)).